Consider the following 253-residue polypeptide: Flap endonuclease Xni (253 aa).

Asp-104 is a binding site for Mg(2+). Positions 160 to 250 (VAPQQLTDFW…HGNLQQLRLN (91 aa)) constitute a 5'-3' exonuclease domain. Positions 171, 172, 180, 182, and 185 each coordinate K(+). Residues 184–189 (GIGAKT) form an interaction with DNA region.

The protein belongs to the Xni family. Mg(2+) serves as cofactor. The cofactor is K(+).

In terms of biological role, has flap endonuclease activity. During DNA replication, flap endonucleases cleave the 5'-overhanging flap structure that is generated by displacement synthesis when DNA polymerase encounters the 5'-end of a downstream Okazaki fragment. The sequence is that of Flap endonuclease Xni from Edwardsiella ictaluri (strain 93-146).